The following is a 320-amino-acid chain: 1,5-anhydro-D-fructose reductase (320 aa).

Y40 (proton donor) is an active-site residue. Residue H102 participates in substrate binding. NADP(+) contacts are provided by residues Q194 and 265-277 (IPGS…IKEN).

The protein belongs to the aldo/keto reductase family. Monomer.

Its subcellular location is the cytoplasm. The enzyme catalyses 1,5-anhydro-D-glucitol + NADP(+) = 1,5-anhydro-D-fructose + NADPH + H(+). Its activity is regulated as follows. Inhibited by p-chloromercuribenzoic acid and alkyliodines. Its function is as follows. Catalyzes the NADPH-dependent reduction of 1,5-anhydro-D-fructose (AF) to 1,5-anhydro-D-glucitol. This chain is 1,5-anhydro-D-fructose reductase (AKR1E2), found in Macaca fascicularis (Crab-eating macaque).